The sequence spans 215 residues: Wtf element wtf7 (215 aa).

The disordered stretch occupies residues 1–21 (MSGSYAPIEDSADELSVHSGN). 3 helical membrane passes run 119–139 (LAQSLFLLLPFNFIFFACLFF), 149–169 (LMGWILFGIWCLTCFLSSFIL), and 189–209 (LILFGLLFPGIVTMVVFYALY).

This sequence belongs to the WTF family.

Its subcellular location is the spore membrane. In terms of biological role, may act in meiotic drive. This Schizosaccharomyces pombe (strain 972 / ATCC 24843) (Fission yeast) protein is Wtf element wtf7.